A 426-amino-acid polypeptide reads, in one-letter code: Histidine--tRNA ligase (426 aa).

It belongs to the class-II aminoacyl-tRNA synthetase family. As to quaternary structure, homodimer.

Its subcellular location is the cytoplasm. It catalyses the reaction tRNA(His) + L-histidine + ATP = L-histidyl-tRNA(His) + AMP + diphosphate + H(+). This is Histidine--tRNA ligase from Streptococcus pyogenes serotype M5 (strain Manfredo).